A 30-amino-acid polypeptide reads, in one-letter code: Vitri peptide A (30 aa).

The cyclopeptide (Gly-Asn) cross-link spans 1-30 (GIPCGESCVWIPCITSAIGCSCKSKVCYRN). 3 disulfides stabilise this stretch: cysteine 4-cysteine 20, cysteine 8-cysteine 22, and cysteine 13-cysteine 27.

Post-translationally, this is a cyclic peptide.

In terms of biological role, probably participates in a plant defense mechanism. Has strong cytotoxic activity against human lymphoma U-937 GTB and human myeloma RPMI-8226/s cell lines. This is Vitri peptide A from Viola arvensis (European field pansy).